A 719-amino-acid chain; its full sequence is DNA ligase (719 aa).

NAD(+) contacts are provided by residues 42–46, 92–93, and glutamate 126; these read DAAYD and SL. The active-site N6-AMP-lysine intermediate is the lysine 128. The NAD(+) site is built by arginine 149, glutamate 185, lysine 301, and lysine 325. Residues cysteine 430, cysteine 433, cysteine 448, and cysteine 454 each coordinate Zn(2+). One can recognise a BRCT domain in the interval 640-719; the sequence is ATGSPVEGKT…DDWFKLVGED (80 aa).

This sequence belongs to the NAD-dependent DNA ligase family. LigA subfamily. The cofactor is Mg(2+). Mn(2+) serves as cofactor.

It carries out the reaction NAD(+) + (deoxyribonucleotide)n-3'-hydroxyl + 5'-phospho-(deoxyribonucleotide)m = (deoxyribonucleotide)n+m + AMP + beta-nicotinamide D-nucleotide.. In terms of biological role, DNA ligase that catalyzes the formation of phosphodiester linkages between 5'-phosphoryl and 3'-hydroxyl groups in double-stranded DNA using NAD as a coenzyme and as the energy source for the reaction. It is essential for DNA replication and repair of damaged DNA. This chain is DNA ligase, found in Brucella melitensis biotype 1 (strain ATCC 23456 / CCUG 17765 / NCTC 10094 / 16M).